Consider the following 243-residue polypeptide: Peptidyl-tRNA hydrolase (243 aa).

Tyr-14 serves as a coordination point for tRNA. Residue His-19 is the Proton acceptor of the active site. The tRNA site is built by Tyr-64, Asn-66, and Asn-112. Residues 190–207 (KAEEEKPRKEGKDGEKKP) show a composition bias toward basic and acidic residues. A disordered region spans residues 190 to 243 (KAEEEKPRKEGKDGEKKPAGQSHIRQARSSNQPKLPATGPMAEMLKKMFGNKGE). Polar residues predominate over residues 212 to 222 (HIRQARSSNQP).

The protein belongs to the PTH family. Monomer.

Its subcellular location is the cytoplasm. The enzyme catalyses an N-acyl-L-alpha-aminoacyl-tRNA + H2O = an N-acyl-L-amino acid + a tRNA + H(+). In terms of biological role, hydrolyzes ribosome-free peptidyl-tRNAs (with 1 or more amino acids incorporated), which drop off the ribosome during protein synthesis, or as a result of ribosome stalling. Catalyzes the release of premature peptidyl moieties from peptidyl-tRNA molecules trapped in stalled 50S ribosomal subunits, and thus maintains levels of free tRNAs and 50S ribosomes. The protein is Peptidyl-tRNA hydrolase of Rhizobium etli (strain CIAT 652).